The primary structure comprises 249 residues: MRKKLVAGNWKMHGSLQQNAALLELIKAGVSSLPCEVAVCPPYPYLGQVQSILSGSALAWGAQSVSEHQSGAFTGEVAASMLLEFGCRYVLVGHSERRALYGETDTVVSAKFEAVQRAGLVPVLCVGETLAERESGMTSVVVARQLSAVLGRVGVAAMASAVVAYEPVWAIGTGVTASPAQAQEVHAAIRAKVAELDLGVANGLRILYGGSVKPQNAMELFGQDDIDGGLIGGAALVADDFLAICRAAN.

Substrate is bound at residue 9–11; it reads NWK. Histidine 94 serves as the catalytic Electrophile. The active-site Proton acceptor is the glutamate 166. Residues glycine 172, serine 211, and 232-233 contribute to the substrate site; that span reads GG.

This sequence belongs to the triosephosphate isomerase family. Homodimer.

The protein resides in the cytoplasm. The enzyme catalyses D-glyceraldehyde 3-phosphate = dihydroxyacetone phosphate. The protein operates within carbohydrate biosynthesis; gluconeogenesis. It functions in the pathway carbohydrate degradation; glycolysis; D-glyceraldehyde 3-phosphate from glycerone phosphate: step 1/1. In terms of biological role, involved in the gluconeogenesis. Catalyzes stereospecifically the conversion of dihydroxyacetone phosphate (DHAP) to D-glyceraldehyde-3-phosphate (G3P). The protein is Triosephosphate isomerase of Dechloromonas aromatica (strain RCB).